A 677-amino-acid chain; its full sequence is UvrABC system protein B (677 aa).

The Helicase ATP-binding domain occupies Ala27 to Gly192. Gly40–Thr47 serves as a coordination point for ATP. A Beta-hairpin motif is present at residues Tyr93–Ile116. The region spanning Gln432–Leu594 is the Helicase C-terminal domain. The 36-residue stretch at Ala638–Arg673 folds into the UVR domain.

The protein belongs to the UvrB family. As to quaternary structure, forms a heterotetramer with UvrA during the search for lesions. Interacts with UvrC in an incision complex.

The protein localises to the cytoplasm. Functionally, the UvrABC repair system catalyzes the recognition and processing of DNA lesions. A damage recognition complex composed of 2 UvrA and 2 UvrB subunits scans DNA for abnormalities. Upon binding of the UvrA(2)B(2) complex to a putative damaged site, the DNA wraps around one UvrB monomer. DNA wrap is dependent on ATP binding by UvrB and probably causes local melting of the DNA helix, facilitating insertion of UvrB beta-hairpin between the DNA strands. Then UvrB probes one DNA strand for the presence of a lesion. If a lesion is found the UvrA subunits dissociate and the UvrB-DNA preincision complex is formed. This complex is subsequently bound by UvrC and the second UvrB is released. If no lesion is found, the DNA wraps around the other UvrB subunit that will check the other stand for damage. In Nitratidesulfovibrio vulgaris (strain DP4) (Desulfovibrio vulgaris), this protein is UvrABC system protein B.